We begin with the raw amino-acid sequence, 72 residues long: Large ribosomal subunit protein uL29 (72 aa).

This sequence belongs to the universal ribosomal protein uL29 family.

This Rhodopirellula baltica (strain DSM 10527 / NCIMB 13988 / SH1) protein is Large ribosomal subunit protein uL29.